A 467-amino-acid chain; its full sequence is tRNA modification GTPase MnmE (467 aa).

Residues Arg-30, Glu-92, and Arg-131 each coordinate (6S)-5-formyl-5,6,7,8-tetrahydrofolate. In terms of domain architecture, TrmE-type G spans 226–388; it reads GLKVAIIGRP…LEAAILNAVN (163 aa). Asn-236 is a binding site for K(+). GTP-binding positions include 236-241, 255-261, and 280-283; these read NVGKSS, TDLPGTT, and DTAG. Position 240 (Ser-240) interacts with Mg(2+). K(+)-binding residues include Thr-255, Leu-257, and Thr-260. Thr-261 is a Mg(2+) binding site. A (6S)-5-formyl-5,6,7,8-tetrahydrofolate-binding site is contributed by Lys-467.

The protein belongs to the TRAFAC class TrmE-Era-EngA-EngB-Septin-like GTPase superfamily. TrmE GTPase family. Homodimer. Heterotetramer of two MnmE and two MnmG subunits. K(+) is required as a cofactor.

Its subcellular location is the cytoplasm. In terms of biological role, exhibits a very high intrinsic GTPase hydrolysis rate. Involved in the addition of a carboxymethylaminomethyl (cmnm) group at the wobble position (U34) of certain tRNAs, forming tRNA-cmnm(5)s(2)U34. The polypeptide is tRNA modification GTPase MnmE (Trichodesmium erythraeum (strain IMS101)).